A 253-amino-acid polypeptide reads, in one-letter code: Ubiquinone/menaquinone biosynthesis C-methyltransferase UbiE (253 aa).

S-adenosyl-L-methionine-binding positions include T76, D97, 125–126 (NA), and S142.

It belongs to the class I-like SAM-binding methyltransferase superfamily. MenG/UbiE family.

The enzyme catalyses a 2-demethylmenaquinol + S-adenosyl-L-methionine = a menaquinol + S-adenosyl-L-homocysteine + H(+). It catalyses the reaction a 2-methoxy-6-(all-trans-polyprenyl)benzene-1,4-diol + S-adenosyl-L-methionine = a 5-methoxy-2-methyl-3-(all-trans-polyprenyl)benzene-1,4-diol + S-adenosyl-L-homocysteine + H(+). It functions in the pathway quinol/quinone metabolism; menaquinone biosynthesis; menaquinol from 1,4-dihydroxy-2-naphthoate: step 2/2. The protein operates within cofactor biosynthesis; ubiquinone biosynthesis. Methyltransferase required for the conversion of demethylmenaquinol (DMKH2) to menaquinol (MKH2) and the conversion of 2-polyprenyl-6-methoxy-1,4-benzoquinol (DDMQH2) to 2-polyprenyl-3-methyl-6-methoxy-1,4-benzoquinol (DMQH2). In Xanthomonas campestris pv. campestris (strain ATCC 33913 / DSM 3586 / NCPPB 528 / LMG 568 / P 25), this protein is Ubiquinone/menaquinone biosynthesis C-methyltransferase UbiE.